A 90-amino-acid polypeptide reads, in one-letter code: Probable Fe(2+)-trafficking protein (90 aa).

Belongs to the Fe(2+)-trafficking protein family. Monomer.

Functionally, could be a mediator in iron transactions between iron acquisition and iron-requiring processes, such as synthesis and/or repair of Fe-S clusters in biosynthetic enzymes. The protein is Probable Fe(2+)-trafficking protein of Pectobacterium atrosepticum (strain SCRI 1043 / ATCC BAA-672) (Erwinia carotovora subsp. atroseptica).